We begin with the raw amino-acid sequence, 136 residues long: Prefoldin subunit alpha (136 aa).

Belongs to the prefoldin subunit alpha family. As to quaternary structure, heterohexamer of two alpha and four beta subunits.

The protein resides in the cytoplasm. Functionally, molecular chaperone capable of stabilizing a range of proteins. Seems to fulfill an ATP-independent, HSP70-like function in archaeal de novo protein folding. This Pyrobaculum arsenaticum (strain DSM 13514 / JCM 11321 / PZ6) protein is Prefoldin subunit alpha.